The primary structure comprises 201 residues: Fimbrial protein FimX (201 aa).

The N-terminal stretch at 1-21 (MQAKTFLLGAALAGVALAAHA) is a signal peptide. Cysteine 37 and cysteine 79 form a disulfide bridge.

This sequence belongs to the fimbrial protein family.

It is found in the fimbrium. In terms of biological role, bordetella pertussis is the causative agent of whooping cough. An essential step in the disease process is the attachment of the bacteria to the ciliated epithelium of the respiratory tract, enabling the organism to resist normal host-clearance mechanisms. It is unclear which bacterial cell surface component are responsible for adherence but the fimbriae of B.pertussis are prime candidates for being involved in this process. This chain is Fimbrial protein FimX (fimX), found in Bordetella pertussis (strain Tohama I / ATCC BAA-589 / NCTC 13251).